The following is a 769-amino-acid chain: Acetyl-coenzyme A carboxylase carboxyl transferase subunit alpha, chloroplastic (769 aa).

The transit peptide at 1–54 (MASISHSSLALGGASSASASDYLRSSSNGVNGVPLKTLGRAVFTTIRRKDLAVT) directs the protein to the chloroplast. The CoA carboxyltransferase C-terminal domain maps to 132–385 (LENKYRQALK…KIAINENMNE (254 aa)). Coiled coils occupy residues 426-504 (EAVF…ASSE) and 631-744 (KQNQ…SDGS). A disordered region spans residues 718-769 (GLQEKQDELEKELAAARELAAEESDGSVKEDDDDDEDSSESGKSEMVNPSFA). The segment covering 721–732 (EKQDELEKELAA) has biased composition (basic and acidic residues). Positions 738-756 (AEESDGSVKEDDDDDEDSS) are enriched in acidic residues. At S741 the chain carries Phosphoserine.

Belongs to the AccA family. Acetyl-CoA carboxylase is a heterohexamer composed of biotin carboxyl carrier protein, biotin carboxylase and two subunits each of ACCase subunit alpha and ACCase plastid-coded subunit beta (accD). Accumulates in fatty acids synthesizing tissues such as embryos, expanding leaves, flower buds, flowers, and developing siliques.

It is found in the plastid. The protein localises to the chloroplast inner membrane. It catalyses the reaction N(6)-carboxybiotinyl-L-lysyl-[protein] + acetyl-CoA = N(6)-biotinyl-L-lysyl-[protein] + malonyl-CoA. Its pathway is lipid metabolism; malonyl-CoA biosynthesis; malonyl-CoA from acetyl-CoA: step 1/1. In terms of biological role, component of the acetyl coenzyme A carboxylase (ACC) complex. First, biotin carboxylase catalyzes the carboxylation of biotin on its carrier protein (BCCP) and then the CO(2) group is transferred by the carboxyltransferase to acetyl-CoA to form malonyl-CoA. In Arabidopsis thaliana (Mouse-ear cress), this protein is Acetyl-coenzyme A carboxylase carboxyl transferase subunit alpha, chloroplastic (CAC3).